The sequence spans 245 residues: 2,3-bisphosphoglycerate-dependent phosphoglycerate mutase (245 aa).

Residues R8–N15, T21–G22, R60, E87–Y90, K98, R114–R115, and G183–N184 each bind substrate. H9 acts as the Tele-phosphohistidine intermediate in catalysis. The active-site Proton donor/acceptor is E87.

It belongs to the phosphoglycerate mutase family. BPG-dependent PGAM subfamily.

The enzyme catalyses (2R)-2-phosphoglycerate = (2R)-3-phosphoglycerate. It functions in the pathway carbohydrate degradation; glycolysis; pyruvate from D-glyceraldehyde 3-phosphate: step 3/5. In terms of biological role, catalyzes the interconversion of 2-phosphoglycerate and 3-phosphoglycerate. This chain is 2,3-bisphosphoglycerate-dependent phosphoglycerate mutase, found in Bacillus cereus (strain ATCC 14579 / DSM 31 / CCUG 7414 / JCM 2152 / NBRC 15305 / NCIMB 9373 / NCTC 2599 / NRRL B-3711).